The primary structure comprises 476 residues: Siroheme synthase (476 aa).

Positions 1 to 207 (MTANVLFPLF…QRHAEAEAVL (207 aa)) are precorrin-2 dehydrogenase /sirohydrochlorin ferrochelatase. Residues 25 to 26 (KV) and 46 to 47 (PS) contribute to the NAD(+) site. Ser132 carries the post-translational modification Phosphoserine. The uroporphyrinogen-III C-methyltransferase stretch occupies residues 220–476 (GSVTLVGAGA…SAPCPPALIL (257 aa)). The Proton acceptor role is filled by Asp252. Lys274 functions as the Proton donor in the catalytic mechanism. S-adenosyl-L-methionine-binding positions include 305–307 (GGD), Val310, 335–336 (TA), Met387, and Gly416.

This sequence in the N-terminal section; belongs to the precorrin-2 dehydrogenase / sirohydrochlorin ferrochelatase family. In the C-terminal section; belongs to the precorrin methyltransferase family.

It carries out the reaction uroporphyrinogen III + 2 S-adenosyl-L-methionine = precorrin-2 + 2 S-adenosyl-L-homocysteine + H(+). The catalysed reaction is precorrin-2 + NAD(+) = sirohydrochlorin + NADH + 2 H(+). It catalyses the reaction siroheme + 2 H(+) = sirohydrochlorin + Fe(2+). It participates in cofactor biosynthesis; adenosylcobalamin biosynthesis; precorrin-2 from uroporphyrinogen III: step 1/1. The protein operates within cofactor biosynthesis; adenosylcobalamin biosynthesis; sirohydrochlorin from precorrin-2: step 1/1. Its pathway is porphyrin-containing compound metabolism; siroheme biosynthesis; precorrin-2 from uroporphyrinogen III: step 1/1. It functions in the pathway porphyrin-containing compound metabolism; siroheme biosynthesis; siroheme from sirohydrochlorin: step 1/1. It participates in porphyrin-containing compound metabolism; siroheme biosynthesis; sirohydrochlorin from precorrin-2: step 1/1. Multifunctional enzyme that catalyzes the SAM-dependent methylations of uroporphyrinogen III at position C-2 and C-7 to form precorrin-2 via precorrin-1. Then it catalyzes the NAD-dependent ring dehydrogenation of precorrin-2 to yield sirohydrochlorin. Finally, it catalyzes the ferrochelation of sirohydrochlorin to yield siroheme. The polypeptide is Siroheme synthase (Xylella fastidiosa (strain 9a5c)).